The chain runs to 99 residues: Sarcosine oxidase subunit delta (99 aa).

Zn(2+)-binding residues include Cys6, Cys9, His59, and Cys63.

It belongs to the SoxD family. Heterotetramer composed of subunits alpha (SoxA), beta (SoxB), gamma (SoxG) and delta (SoxD).

The protein localises to the cytoplasm. The catalysed reaction is sarcosine + (6S)-5,6,7,8-tetrahydrofolate + O2 = (6R)-5,10-methylene-5,6,7,8-tetrahydrofolate + glycine + H2O2. The enzyme catalyses sarcosine + O2 + H2O = formaldehyde + glycine + H2O2. Its activity is regulated as follows. Inhibited by Zn(2+), Cu(2+), Cd(2+), Hg(2+), Ag(+), p-chloromercuribenzoate (p-CMB), iodoacetamide, N-ethylmaleimide, CN(-), o-phenanthroline and sodium lauryl sulfate. In terms of biological role, in the presence of tetrahydrofolate, catalyzes the oxidative demethylation of sarcosine to yield glycine, 5,10-methylenetetrahydrofolate and hydrogen peroxide. In the absence of tetrahydrofolate, catalyzes the oxidative demethylation of sarcosine to yield glycine, formaldehyde and hydrogen peroxide. Can also use N-methyl-L-alanine and N-ethyl-L-glycine. Is very specific for oxygen as an acceptor. The sequence is that of Sarcosine oxidase subunit delta from Corynebacterium sp. (strain U-96).